A 197-amino-acid chain; its full sequence is Dephospho-CoA kinase (197 aa).

In terms of domain architecture, DPCK spans 5-197 (RLGLTGSIGM…IAHIRETADA (193 aa)). ATP is bound at residue 13-18 (GMGKST).

The protein belongs to the CoaE family.

It localises to the cytoplasm. It carries out the reaction 3'-dephospho-CoA + ATP = ADP + CoA + H(+). It functions in the pathway cofactor biosynthesis; coenzyme A biosynthesis; CoA from (R)-pantothenate: step 5/5. Functionally, catalyzes the phosphorylation of the 3'-hydroxyl group of dephosphocoenzyme A to form coenzyme A. The sequence is that of Dephospho-CoA kinase from Cereibacter sphaeroides (strain ATCC 17023 / DSM 158 / JCM 6121 / CCUG 31486 / LMG 2827 / NBRC 12203 / NCIMB 8253 / ATH 2.4.1.) (Rhodobacter sphaeroides).